A 283-amino-acid polypeptide reads, in one-letter code: Pantothenate synthetase (283 aa).

31-38 contributes to the ATP binding site; that stretch reads MGALHDGH. The Proton donor role is filled by His38. Gln62 serves as a coordination point for (R)-pantoate. Gln62 provides a ligand contact to beta-alanine. Residue 148–151 participates in ATP binding; sequence GKKD. Residue Gln154 participates in (R)-pantoate binding. Residues Val177 and 185–188 each bind ATP; that span reads KSSR.

This sequence belongs to the pantothenate synthetase family. In terms of assembly, homodimer.

Its subcellular location is the cytoplasm. The catalysed reaction is (R)-pantoate + beta-alanine + ATP = (R)-pantothenate + AMP + diphosphate + H(+). It functions in the pathway cofactor biosynthesis; (R)-pantothenate biosynthesis; (R)-pantothenate from (R)-pantoate and beta-alanine: step 1/1. Functionally, catalyzes the condensation of pantoate with beta-alanine in an ATP-dependent reaction via a pantoyl-adenylate intermediate. The protein is Pantothenate synthetase of Staphylococcus aureus (strain Mu3 / ATCC 700698).